Consider the following 206-residue polypeptide: Holliday junction branch migration complex subunit RuvA (206 aa).

The domain I stretch occupies residues 1-64 (MIGRLSGTIL…EDAQLLYGFN (64 aa)). The tract at residues 65–143 (KKSERELFRE…GWGEGDLFTP (79 aa)) is domain II. Residues 144–157 (ASDAAASNAEIQKY) are flexible linker. The interval 158-206 (SSARAEDEAVSALIALGYKALQAAKVVSQVVKPEMSSENIIREALRSMV) is domain III.

It belongs to the RuvA family. Homotetramer. Forms an RuvA(8)-RuvB(12)-Holliday junction (HJ) complex. HJ DNA is sandwiched between 2 RuvA tetramers; dsDNA enters through RuvA and exits via RuvB. An RuvB hexamer assembles on each DNA strand where it exits the tetramer. Each RuvB hexamer is contacted by two RuvA subunits (via domain III) on 2 adjacent RuvB subunits; this complex drives branch migration. In the full resolvosome a probable DNA-RuvA(4)-RuvB(12)-RuvC(2) complex forms which resolves the HJ.

It is found in the cytoplasm. Functionally, the RuvA-RuvB-RuvC complex processes Holliday junction (HJ) DNA during genetic recombination and DNA repair, while the RuvA-RuvB complex plays an important role in the rescue of blocked DNA replication forks via replication fork reversal (RFR). RuvA specifically binds to HJ cruciform DNA, conferring on it an open structure. The RuvB hexamer acts as an ATP-dependent pump, pulling dsDNA into and through the RuvAB complex. HJ branch migration allows RuvC to scan DNA until it finds its consensus sequence, where it cleaves and resolves the cruciform DNA. In Photobacterium profundum (strain SS9), this protein is Holliday junction branch migration complex subunit RuvA.